Consider the following 485-residue polypeptide: Glutamyl-tRNA(Gln) amidotransferase subunit A (485 aa).

Catalysis depends on charge relay system residues lysine 79 and serine 154. Serine 178 serves as the catalytic Acyl-ester intermediate.

The protein belongs to the amidase family. GatA subfamily. In terms of assembly, heterotrimer of A, B and C subunits.

The catalysed reaction is L-glutamyl-tRNA(Gln) + L-glutamine + ATP + H2O = L-glutaminyl-tRNA(Gln) + L-glutamate + ADP + phosphate + H(+). Allows the formation of correctly charged Gln-tRNA(Gln) through the transamidation of misacylated Glu-tRNA(Gln) in organisms which lack glutaminyl-tRNA synthetase. The reaction takes place in the presence of glutamine and ATP through an activated gamma-phospho-Glu-tRNA(Gln). This chain is Glutamyl-tRNA(Gln) amidotransferase subunit A, found in Staphylococcus saprophyticus subsp. saprophyticus (strain ATCC 15305 / DSM 20229 / NCIMB 8711 / NCTC 7292 / S-41).